A 256-amino-acid chain; its full sequence is Ribonuclease HII (256 aa).

Positions 72 to 256 constitute an RNase H type-2 domain; sequence ALICGIDEVG…SFEPIKSMMK (185 aa). Residues aspartate 78, glutamate 79, and aspartate 170 each contribute to the a divalent metal cation site.

Belongs to the RNase HII family. Mn(2+) serves as cofactor. Requires Mg(2+) as cofactor.

Its subcellular location is the cytoplasm. It carries out the reaction Endonucleolytic cleavage to 5'-phosphomonoester.. Functionally, endonuclease that specifically degrades the RNA of RNA-DNA hybrids. The sequence is that of Ribonuclease HII from Staphylococcus epidermidis (strain ATCC 12228 / FDA PCI 1200).